Here is a 226-residue protein sequence, read N- to C-terminus: Large ribosomal subunit protein uL1 (226 aa).

It belongs to the universal ribosomal protein uL1 family. As to quaternary structure, part of the 50S ribosomal subunit.

Its function is as follows. Binds directly to 23S rRNA. The L1 stalk is quite mobile in the ribosome, and is involved in E site tRNA release. Functionally, protein L1 is also a translational repressor protein, it controls the translation of the L11 operon by binding to its mRNA. The chain is Large ribosomal subunit protein uL1 from Buchnera aphidicola subsp. Cinara cedri (strain Cc).